An 82-amino-acid polypeptide reads, in one-letter code: uncharacterized protein (82 aa).

Positions 1 to 20 are disordered; it reads MMNLSPPFKSPSGSSRAGRR.

This is an uncharacterized protein from Archaeoglobus fulgidus (strain ATCC 49558 / DSM 4304 / JCM 9628 / NBRC 100126 / VC-16).